Here is a 108-residue protein sequence, read N- to C-terminus: Tetrahydromethanopterin S-methyltransferase subunit B (108 aa).

Residues 77–99 traverse the membrane as a helical segment; sequence FQGMFFGFWVTMAVLVLVTILAV.

This sequence belongs to the MtrB family. The complex is composed of 8 subunits; MtrA, MtrB, MtrC, MtrD, MtrE, MtrF, MtrG and MtrH.

It localises to the cell membrane. The enzyme catalyses 5-methyl-5,6,7,8-tetrahydromethanopterin + coenzyme M + 2 Na(+)(in) = 5,6,7,8-tetrahydromethanopterin + methyl-coenzyme M + 2 Na(+)(out). It functions in the pathway one-carbon metabolism; methanogenesis from CO(2); methyl-coenzyme M from 5,10-methylene-5,6,7,8-tetrahydromethanopterin: step 2/2. Its function is as follows. Part of a complex that catalyzes the formation of methyl-coenzyme M and tetrahydromethanopterin from coenzyme M and methyl-tetrahydromethanopterin. This is an energy-conserving, sodium-ion translocating step. The protein is Tetrahydromethanopterin S-methyltransferase subunit B of Methanococcus maripaludis (strain DSM 14266 / JCM 13030 / NBRC 101832 / S2 / LL).